The primary structure comprises 493 residues: Ketol-acid reductoisomerase (NADP(+)) (493 aa).

One can recognise a KARI N-terminal Rossmann domain in the interval 14-208 (LDQLGRCRFM…GGDRAGVLES (195 aa)). NADP(+)-binding positions include 45–48 (CGAQ), Arg-68, Arg-76, Ser-78, and 108–110 (DKQ). Residue His-132 is part of the active site. An NADP(+)-binding site is contributed by Gly-158. 2 consecutive KARI C-terminal knotted domains span residues 209-345 (SFVA…APKA) and 346-486 (DGIK…MTDM). Mg(2+)-binding residues include Asp-217, Glu-221, Glu-390, and Glu-394. Ser-415 contributes to the substrate binding site.

It belongs to the ketol-acid reductoisomerase family. Requires Mg(2+) as cofactor.

It carries out the reaction (2R)-2,3-dihydroxy-3-methylbutanoate + NADP(+) = (2S)-2-acetolactate + NADPH + H(+). The enzyme catalyses (2R,3R)-2,3-dihydroxy-3-methylpentanoate + NADP(+) = (S)-2-ethyl-2-hydroxy-3-oxobutanoate + NADPH + H(+). It functions in the pathway amino-acid biosynthesis; L-isoleucine biosynthesis; L-isoleucine from 2-oxobutanoate: step 2/4. Its pathway is amino-acid biosynthesis; L-valine biosynthesis; L-valine from pyruvate: step 2/4. Functionally, involved in the biosynthesis of branched-chain amino acids (BCAA). Catalyzes an alkyl-migration followed by a ketol-acid reduction of (S)-2-acetolactate (S2AL) to yield (R)-2,3-dihydroxy-isovalerate. In the isomerase reaction, S2AL is rearranged via a Mg-dependent methyl migration to produce 3-hydroxy-3-methyl-2-ketobutyrate (HMKB). In the reductase reaction, this 2-ketoacid undergoes a metal-dependent reduction by NADPH to yield (R)-2,3-dihydroxy-isovalerate. The polypeptide is Ketol-acid reductoisomerase (NADP(+)) (Mannheimia succiniciproducens (strain KCTC 0769BP / MBEL55E)).